Reading from the N-terminus, the 703-residue chain is Zinc finger protein 750 (703 aa).

Residues 25–51 (YKCFQCPFTCNEKSHLFNHMKYGLCKN) form a CCHC-type zinc finger. Residues Cys-27, Cys-30, His-43, and Cys-49 each contribute to the Zn(2+) site. Disordered stretches follow at residues 60 to 96 (DRVP…SGLS), 121 to 147 (GPHR…EAAV), 362 to 617 (PSKL…EQKQ), and 633 to 703 (NVEP…TRVS). Residues 67 to 78 (KPNSSDPKQTNQ) are compositionally biased toward polar residues. The segment covering 79 to 93 (PDPVVKPTSSKPVPS) has biased composition (low complexity). Residues 375–399 (TELEKQSPTPEAKEPSKDGQRDTEG) are compositionally biased toward basic and acidic residues. Residues 418-428 (SPTNFTQTSQP) show a composition bias toward polar residues. Residues 583–592 (SSGDGPDPSS) show a composition bias toward low complexity. A compositionally biased stretch (basic and acidic residues) spans 605–616 (QDIRAADSDEQK).

The protein localises to the nucleus. In terms of biological role, transcription factor involved in epidermis differentiation. Required for terminal epidermal differentiation: acts downstream of p63/TP63 and activates expression of late epidermal differentiation genes. Specifically binds to the promoter of KLF4 and promotes its expression. In Bos taurus (Bovine), this protein is Zinc finger protein 750 (ZNF750).